The sequence spans 359 residues: Src kinase-associated phosphoprotein 2 (359 aa).

Phosphoserine is present on residues serine 5, serine 6, and serine 9. The segment at 14–64 (PEEIRNLLADVETFVADILKGENLSKKAKEKRESLIKKIKDVKSIYLQEFQ) is homodimerization. Residues 66 to 88 (KGDAEDGEEYDDPFAGPPDTISL) are disordered. A Phosphotyrosine modification is found at tyrosine 75. Residues serine 87 and serine 90 each carry the phosphoserine modification. In terms of domain architecture, PH spans 116 to 219 (FVLKAGYLEK…WVQQLKFVLQ (104 aa)). Tyrosine 151 and tyrosine 197 each carry phosphotyrosine. Serine 223 carries the phosphoserine modification. Residue tyrosine 261 is modified to Phosphotyrosine. Residues 264 to 293 (LPEEEEDSAPVKVEEQRKMSQDSVHHTSGD) form a disordered region. A compositionally biased stretch (basic and acidic residues) spans 275 to 293 (KVEEQRKMSQDSVHHTSGD). Serine 283 and serine 286 each carry phosphoserine. The region spanning 297-358 (DYANFYQGLW…PKAYIMEMYD (62 aa)) is the SH3 domain.

This sequence belongs to the SKAP family. In terms of assembly, homodimer. Interacts with PTPNS1. Part of a complex consisting of SKAP2, FYB1 and PTPNS1. Part of a complex consisting of SKAP2, FYB1 and LILRB3. May interact with actin. Interacts with FYB1, which is required for SKAP2 protein stability. Interacts with LAT, GRB2, PTK2B and PRAM1. May interact with FYN, HCK and LYN. Interacts with FASLG. In terms of processing, phosphorylated in resting platelets. Phosphorylated by FYN on Tyr-261 upon T-cell activation. Dephosphorylated on Tyr-75 by PTPN22. As to expression, ubiquitously expressed. Present in platelets (at protein level).

The protein localises to the cytoplasm. In terms of biological role, may be involved in B-cell and macrophage adhesion processes. In B-cells, may act by coupling the B-cell receptor (BCR) to integrin activation. May play a role in src signaling pathway. This is Src kinase-associated phosphoprotein 2 (SKAP2) from Homo sapiens (Human).